The following is a 522-amino-acid chain: Cytochrome P450 1A1 (522 aa).

Substrate is bound at residue F229. C463 contributes to the heme binding site.

It belongs to the cytochrome P450 family. Heme serves as cofactor. As to expression, liver.

The protein localises to the endoplasmic reticulum membrane. It is found in the microsome membrane. The enzyme catalyses an organic molecule + reduced [NADPH--hemoprotein reductase] + O2 = an alcohol + oxidized [NADPH--hemoprotein reductase] + H2O + H(+). In terms of biological role, cytochromes P450 are a group of heme-thiolate monooxygenases. They oxidize a variety of structurally unrelated compounds, including steroids, fatty acids, and xenobiotics. This Oncorhynchus mykiss (Rainbow trout) protein is Cytochrome P450 1A1 (cyp1a1).